The sequence spans 552 residues: MAGUK p55 subfamily member 2 (552 aa).

L27 domains are found at residues 8-59 and 60-118; these read SESA…EETK and LEAV…YETP. Position 42 is a phosphoserine (serine 42). Residue threonine 117 is modified to Phosphothreonine. Serine 121 carries the phosphoserine modification. The PDZ domain occupies 140–219; sequence MVGIRKTAGE…SVILKILPSY (80 aa). An SH3 domain is found at 225–293; that stretch reads PRQVFVKCHF…PSQLLEEKRK (69 aa). In terms of domain architecture, Guanylate kinase-like spans 350 to 537; the sequence is RKTLVLIGAQ…TFRELQTAME (188 aa).

It belongs to the MAGUK family. Can homomultimerise. Interacts with CACNG2. Interacts (via the SH3-Guanylate kinase-like sub-module) with DLG4/PSD95 and DLGAP1/GKAP. Interacts (via the PDZ domain) with CADM1 (via C-terminus). Interacts with KCNN2/SK2 (via N-terminal domain). Interacts with SRC. Post-translationally, phosphorylated by SRC. In terms of tissue distribution, expressed in hippocampal neurons.

The protein localises to the cell projection. Its subcellular location is the dendrite. It is found in the postsynaptic density. The protein resides in the cytoplasm. It localises to the cytoskeleton. The protein localises to the membrane. Postsynaptic MAGUK scaffold protein that links CADM1 cell adhesion molecules to core components of the postsynaptic density. In CA1 pyramidal neurons, required for synaptic KCNN2-containing channel function and long-term potentiation expression. Seems to negatively regulate SRC function in epithelial cells. This is MAGUK p55 subfamily member 2 from Rattus norvegicus (Rat).